The following is a 595-amino-acid chain: Pentatricopeptide repeat-containing protein At4g21065 (595 aa).

PPR repeat units lie at residues 84 to 118 (NVFI…GLVE), 120 to 154 (DTHT…GFGS), 155 to 185 (LIYV…MPEK), 186 to 220 (DLVA…GIKP), 221 to 255 (DGFT…GLTR), 256 to 290 (NLHS…NSVS), 291 to 317 (WTSL…MEST), 323 to 353 (CEIT…MREE), and 359 to 389 (RIEH…MPMQ). A type E motif region spans residues 394–469 (IWRTLLGACT…VPGHSLVEVG (76 aa)). The tract at residues 470–500 (NRVHEFLMGDKSHPQSDAIYAKLKEMTGRLR) is type E(+) motif. Residues 501-595 (SEGYVPQISN…NGSCSCQDYW (95 aa)) form a type DYW motif region.

Belongs to the PPR family. PCMP-H subfamily.

The protein is Pentatricopeptide repeat-containing protein At4g21065 (PCMP-H28) of Arabidopsis thaliana (Mouse-ear cress).